Here is a 195-residue protein sequence, read N- to C-terminus: Killer cell lectin-like receptor subfamily G member 1 (195 aa).

Residues methionine 1–leucine 38 lie on the Cytoplasmic side of the membrane. The short motif at valine 5–leucine 10 is the ITIM motif element. The helical; Signal-anchor for type II membrane protein transmembrane segment at valine 39–isoleucine 59 threads the bilayer. The Extracellular portion of the chain corresponds to leucine 60–phenylalanine 195. Asparagine 65 is a glycosylation site (N-linked (GlcNAc...) asparagine). An intrachain disulfide couples cysteine 75 to cysteine 86. One can recognise a C-type lectin domain in the interval tyrosine 82 to lysine 185. N-linked (GlcNAc...) asparagine glycosylation is found at asparagine 97, asparagine 137, and asparagine 150. Intrachain disulfides connect cysteine 103–cysteine 184 and cysteine 163–cysteine 176.

As to quaternary structure, forms a monomer and homodimer; disulfide-linked. Interacts (via ITIM motif) with PTPN11 and INPP5D. As to expression, expressed specifically on natural killer (NK) cells and T-cells, mainly CD8 T-cells.

It localises to the cell membrane. Functionally, plays an inhibitory role on natural killer (NK) cells and T-cell functions upon binding to their non-MHC ligands. May mediate missing self recognition by binding to a highly conserved site on classical cadherins, enabling it to monitor expression of E-cadherin/CDH1, N-cadherin/CDH2 and R-cadherin/CDH4 on target cells. The polypeptide is Killer cell lectin-like receptor subfamily G member 1 (KLRG1) (Homo sapiens (Human)).